Here is a 78-residue protein sequence, read N- to C-terminus: Probable [Fe-S]-dependent transcriptional repressor (78 aa).

Iron-sulfur cluster is bound by residues Cys-56, Cys-61, Cys-64, and Cys-70.

Belongs to the FeoC family.

May function as a transcriptional regulator that controls feoABC expression. In Enterobacter sp. (strain 638), this protein is Probable [Fe-S]-dependent transcriptional repressor.